A 410-amino-acid chain; its full sequence is Chorismate synthase (410 aa).

NADP(+)-binding residues include arginine 40 and arginine 46. FMN contacts are provided by residues 129–131 (RSS), 257–258 (QA), glycine 302, 317–321 (KPISS), and arginine 343.

Belongs to the chorismate synthase family. In terms of assembly, homotetramer. FMNH2 is required as a cofactor.

It carries out the reaction 5-O-(1-carboxyvinyl)-3-phosphoshikimate = chorismate + phosphate. It functions in the pathway metabolic intermediate biosynthesis; chorismate biosynthesis; chorismate from D-erythrose 4-phosphate and phosphoenolpyruvate: step 7/7. In terms of biological role, catalyzes the anti-1,4-elimination of the C-3 phosphate and the C-6 proR hydrogen from 5-enolpyruvylshikimate-3-phosphate (EPSP) to yield chorismate, which is the branch point compound that serves as the starting substrate for the three terminal pathways of aromatic amino acid biosynthesis. This reaction introduces a second double bond into the aromatic ring system. The polypeptide is Chorismate synthase (Chlorobaculum parvum (strain DSM 263 / NCIMB 8327) (Chlorobium vibrioforme subsp. thiosulfatophilum)).